Consider the following 571-residue polypeptide: uncharacterized protein (571 aa).

Residues 1 to 3 (MNS) are Cytoplasmic-facing. The helical transmembrane segment at 4–24 (LQILSFVGFTLLVAVITWWKV) threads the bilayer. Over 25 to 74 (RKTDTGSQQGYFLAGRSLKAPVIAASLMLTNLSTEQLVGLSGQAYKSGMS) the chain is Periplasmic. A helical membrane pass occupies residues 75-95 (VMGWEVTSAVTLIFLALIFLP). Residues 96 to 118 (RYLKRGIATIPDFLEERYDKTTR) lie on the Cytoplasmic side of the membrane. The chain crosses the membrane as a helical span at residues 119-139 (IIIDFCFLIATGVCFLPIVLY). The Periplasmic segment spans residues 140–162 (SGALALNSLFHVGESLQISHGAA). A helical transmembrane segment spans residues 163 to 183 (IWLLVILLGLAGILYAVIGGL). Topologically, residues 184-191 (RAMAVADS) are cytoplasmic. Residues 192–212 (INGIGLVIGGLMVPVFGLIAM) form a helical membrane-spanning segment. At 213–240 (GKGSFMQGIEQLTTVHAEKLNSIGGPTD) the chain is on the periplasmic side. Residues 241 to 261 (PLPIGAAFTGLILVNTFYWCT) form a helical membrane-spanning segment. The Cytoplasmic portion of the chain corresponds to 262 to 283 (NQGIVQRTLASKSLAEGQKGAL). The chain crosses the membrane as a helical span at residues 284–304 (LTAVLKMLDPLVLVLPGLIAF). At 305–324 (HLYQDLPKADMAYPTLVNNV) the chain is on the periplasmic side. The chain crosses the membrane as a helical span at residues 325–345 (LPVPMVGFFGAVLFGAVISTF). Residues 346-380 (NGFLNSASTLFSMGIYRRIINQNAEPQQLVTVGRK) lie on the Cytoplasmic side of the membrane. The helical transmembrane segment at 381 to 401 (FGFFIAIVSVLVAPWIANAPQ) threads the bilayer. The Periplasmic segment spans residues 402–415 (GLYSWMKQLNGIYN). Residues 416–436 (VPLVTIIIMGFFFPRIPALAA) form a helical membrane-spanning segment. Residue K437 is a topological domain, cytoplasmic. The helical transmembrane segment at 438–458 (VAMGIGIISYITINYLVKFDF) threads the bilayer. The Periplasmic segment spans residues 459 to 460 (HF). The helical transmembrane segment at 461 to 481 (LYVLACTFCINVVVMLVIGFI) threads the bilayer. Residues 482 to 505 (KPRATPFTFKDAFAVDMKPWKNVK) are Cytoplasmic-facing. The helical transmembrane segment at 506–526 (IASIGILFAMIGVYAGLAEFG) threads the bilayer. At 527 to 532 (GYGTRW) the chain is on the periplasmic side. The chain crosses the membrane as a helical span at residues 533 to 553 (LAMISYFIAAVVIVYLIFDSW). Topologically, residues 554–571 (RHRHDPAVTFTPDGKDSL) are cytoplasmic.

This sequence belongs to the sodium:solute symporter (SSF) (TC 2.A.21) family.

It is found in the cell inner membrane. This is an uncharacterized protein from Escherichia coli (strain K12).